The chain runs to 815 residues: uncharacterized protein (815 aa).

Disordered regions lie at residues 123 to 183 (QSNT…QPST), 249 to 274 (NVNN…NNTN), 592 to 668 (IKQN…NLNS), and 765 to 815 (NNEE…EEIK). 2 stretches are compositionally biased toward polar residues: residues 135–154 (SIIT…TSTT) and 174–183 (DSITVLQPST). The span at 595–611 (NGSSSSNNNSKLSSTNS) shows a compositional bias: low complexity. A compositionally biased stretch (polar residues) spans 612–639 (GQTSDNPINSSNGGQSIKKQGSNLSLNR). A compositionally biased stretch (low complexity) spans 640–668 (QQSSTKLNNQSNNNNNNNANTTNQNNLNS). The segment covering 765–782 (NNEEHNNNNKENNNENNK) has biased composition (basic and acidic residues). Over residues 783–809 (ENINNNNNIINNNNDNNCNENNNNCNE) the composition is skewed to low complexity.

This is an uncharacterized protein from Dictyostelium discoideum (Social amoeba).